The primary structure comprises 931 residues: Kinesin heavy chain (931 aa).

One can recognise a Kinesin motor domain in the interval 6–329; sequence SIKVVARFRP…LRFGMRAKSI (324 aa). ATP contacts are provided by residues 87 to 94 and 237 to 244; these read GQTGAGKS and GSEKVGKT. The stretch at 342 to 864 forms a coiled coil; it reads AELKSLLKKA…VKERLELAKA (523 aa). Disordered regions lie at residues 388 to 465 and 886 to 931; these read TTDA…EKQL and AKPL…FTKS. Residues 402-419 are compositionally biased toward polar residues; the sequence is STRPSTPSLISDSRSETP. The segment covering 432–456 has biased composition (basic and acidic residues); that stretch reads LDKDEREEFLRRENELQDQISEKES. The span at 902-931 shows a compositional bias: polar residues; that stretch reads PTIQNLQGQNEGNTSSGSSSKRASWFFTKS.

This sequence belongs to the TRAFAC class myosin-kinesin ATPase superfamily. Kinesin family. Kinesin subfamily.

It localises to the cytoplasm. The protein localises to the cytoskeleton. Its function is as follows. Kinesin is a microtubule-associated force-producing protein that may play a role in organelle transport. Its motor activity is directed toward the microtubule's plus end. The polypeptide is Kinesin heavy chain (KLP1) (Gibberella moniliformis (Maize ear and stalk rot fungus)).